The sequence spans 553 residues: Chaperonin GroEL 2 (553 aa).

Residues 29–32 (TLGP), 86–90 (DGTTT), G414, and D495 each bind ATP.

Belongs to the chaperonin (HSP60) family. In terms of assembly, forms a cylinder of 14 subunits composed of two heptameric rings stacked back-to-back. Interacts with the co-chaperonin GroES.

It localises to the cytoplasm. The catalysed reaction is ATP + H2O + a folded polypeptide = ADP + phosphate + an unfolded polypeptide.. In terms of biological role, together with its co-chaperonin GroES, plays an essential role in assisting protein folding. The GroEL-GroES system forms a nano-cage that allows encapsulation of the non-native substrate proteins and provides a physical environment optimized to promote and accelerate protein folding. The protein is Chaperonin GroEL 2 of Gloeobacter violaceus (strain ATCC 29082 / PCC 7421).